Reading from the N-terminus, the 229-residue chain is Peroxiredoxin 1 (229 aa).

A Thioredoxin domain is found at 33 to 192; it reads LGPKNKAPDF…AFRTLKAFQF (160 aa). Cys78 functions as the Cysteine sulfenic acid (-SOH) intermediate in the catalytic mechanism.

The protein belongs to the peroxiredoxin family. AhpC/Prx1 subfamily. As to quaternary structure, homodimer; disulfide-linked, upon oxidation.

It carries out the reaction a hydroperoxide + [thioredoxin]-dithiol = an alcohol + [thioredoxin]-disulfide + H2O. Its function is as follows. Thiol-specific peroxidase that catalyzes the reduction of hydrogen peroxide and organic hydroperoxides to water and alcohols, respectively. Plays a role in cell protection against oxidative stress by detoxifying peroxides and as sensor of hydrogen peroxide-mediated signaling events. The chain is Peroxiredoxin 1 (TSA1) from Brugia malayi (Filarial nematode worm).